The chain runs to 293 residues: Probable flavonol synthase 6 (293 aa).

The region spanning lysine 156–proline 253 is the Fe2OG dioxygenase domain. Asparagine 164–tyrosine 166 serves as a coordination point for 2-oxoglutarate. The Fe cation site is built by histidine 178, aspartate 180, and histidine 234. Arginine 244–serine 246 is a binding site for 2-oxoglutarate.

This sequence belongs to the iron/ascorbate-dependent oxidoreductase family. Fe(2+) is required as a cofactor.

It carries out the reaction a (2R,3R)-dihydroflavonol + 2-oxoglutarate + O2 = a flavonol + succinate + CO2 + H2O. It participates in secondary metabolite biosynthesis; flavonoid biosynthesis. In Arabidopsis thaliana (Mouse-ear cress), this protein is Probable flavonol synthase 6 (FLS6).